The following is a 51-amino-acid chain: Large ribosomal subunit protein bL33 (51 aa).

This sequence belongs to the bacterial ribosomal protein bL33 family.

This Pseudoalteromonas atlantica (strain T6c / ATCC BAA-1087) protein is Large ribosomal subunit protein bL33.